The primary structure comprises 411 residues: Ribose-phosphate pyrophosphokinase 3, chloroplastic (411 aa).

A chloroplast-targeting transit peptide spans 1 to 39 (MAAISPANATTAASLSLPQFSSTSSSLSSSSSPSFLNFK). Mg(2+) is bound by residues aspartate 231 and histidine 233. Positions 314–329 (GRHVVIVDDLVQSGGT) are binding of phosphoribosylpyrophosphate.

This sequence belongs to the ribose-phosphate pyrophosphokinase family.

The protein resides in the plastid. It is found in the chloroplast. The catalysed reaction is D-ribose 5-phosphate + ATP = 5-phospho-alpha-D-ribose 1-diphosphate + AMP + H(+). The polypeptide is Ribose-phosphate pyrophosphokinase 3, chloroplastic (PRS3) (Arabidopsis thaliana (Mouse-ear cress)).